The primary structure comprises 211 residues: RNA chaperone ProQ (211 aa).

The disordered stretch occupies residues 113-147 (RRAVEKANNPKANKKRSVYHSGNKSENKKSAGKKF).

It belongs to the ProQ family.

The protein resides in the cytoplasm. RNA chaperone with significant RNA binding, RNA strand exchange and RNA duplexing activities. This Histophilus somni (strain 129Pt) (Haemophilus somnus) protein is RNA chaperone ProQ.